The chain runs to 387 residues: Guanylate kinase 1 (387 aa).

One can recognise a Guanylate kinase-like domain in the interval 137-319; that stretch reads EKPIVISGPS…CYKKLKNLLG (183 aa). Position 144-151 (144-151) interacts with ATP; that stretch reads GPSGVGKG. Active-site residues include Arg177, Arg270, and Arg281. Residues Asn304 and Asp305 each contribute to the ATP site.

The protein belongs to the guanylate kinase family. In terms of assembly, monomer.

It carries out the reaction GMP + ATP = GDP + ADP. In terms of biological role, essential for recycling GMP and indirectly, cGMP. Required for normal development of the gametophyte and embryo, in association with GK2. The sequence is that of Guanylate kinase 1 (GK-1) from Arabidopsis thaliana (Mouse-ear cress).